A 172-amino-acid polypeptide reads, in one-letter code: SsrA-binding protein (172 aa).

Belongs to the SmpB family.

It is found in the cytoplasm. Required for rescue of stalled ribosomes mediated by trans-translation. Binds to transfer-messenger RNA (tmRNA), required for stable association of tmRNA with ribosomes. tmRNA and SmpB together mimic tRNA shape, replacing the anticodon stem-loop with SmpB. tmRNA is encoded by the ssrA gene; the 2 termini fold to resemble tRNA(Ala) and it encodes a 'tag peptide', a short internal open reading frame. During trans-translation Ala-aminoacylated tmRNA acts like a tRNA, entering the A-site of stalled ribosomes, displacing the stalled mRNA. The ribosome then switches to translate the ORF on the tmRNA; the nascent peptide is terminated with the 'tag peptide' encoded by the tmRNA and targeted for degradation. The ribosome is freed to recommence translation, which seems to be the essential function of trans-translation. The chain is SsrA-binding protein from Dehalococcoides mccartyi (strain CBDB1).